An 88-amino-acid polypeptide reads, in one-letter code: Large ribosomal subunit protein bL27 (88 aa).

The segment at 1–22 is disordered; sequence MAHKKGASSSRNGRDSNAQRLG. Over residues 7–19 the composition is skewed to polar residues; that stretch reads ASSSRNGRDSNAQ.

It belongs to the bacterial ribosomal protein bL27 family.

The chain is Large ribosomal subunit protein bL27 from Mycolicibacterium gilvum (strain PYR-GCK) (Mycobacterium gilvum (strain PYR-GCK)).